We begin with the raw amino-acid sequence, 432 residues long: Glutamate-1-semialdehyde 2,1-aminomutase (432 aa).

K270 carries the N6-(pyridoxal phosphate)lysine modification.

It belongs to the class-III pyridoxal-phosphate-dependent aminotransferase family. HemL subfamily. In terms of assembly, homodimer. Pyridoxal 5'-phosphate is required as a cofactor.

Its subcellular location is the cytoplasm. It carries out the reaction (S)-4-amino-5-oxopentanoate = 5-aminolevulinate. Its pathway is porphyrin-containing compound metabolism; protoporphyrin-IX biosynthesis; 5-aminolevulinate from L-glutamyl-tRNA(Glu): step 2/2. The protein is Glutamate-1-semialdehyde 2,1-aminomutase of Acinetobacter baylyi (strain ATCC 33305 / BD413 / ADP1).